The following is a 172-amino-acid chain: Dual-action ribosomal maturation protein DarP (172 aa).

This sequence belongs to the DarP family.

The protein localises to the cytoplasm. Its function is as follows. Member of a network of 50S ribosomal subunit biogenesis factors which assembles along the 30S-50S interface, preventing incorrect 23S rRNA structures from forming. Promotes peptidyl transferase center (PTC) maturation. The protein is Dual-action ribosomal maturation protein DarP of Azotobacter vinelandii (strain DJ / ATCC BAA-1303).